The chain runs to 71 residues: Small ribosomal subunit protein bS21 (71 aa).

The disordered stretch occupies residues 40-71 (KPTQVRKRKQAAAVKRHMKRLNREQQRRQRPY). Residues 43–59 (QVRKRKQAAAVKRHMKR) show a composition bias toward basic residues. The span at 60–71 (LNREQQRRQRPY) shows a compositional bias: basic and acidic residues.

This sequence belongs to the bacterial ribosomal protein bS21 family.

The polypeptide is Small ribosomal subunit protein bS21 (Halorhodospira halophila (strain DSM 244 / SL1) (Ectothiorhodospira halophila (strain DSM 244 / SL1))).